The primary structure comprises 299 residues: Probable lipid kinase YegS (299 aa).

A DAGKc domain is found at 2-133 (ANFPASLLIL…IDMARVNDKT (132 aa)). Residues threonine 40, 66-72 (GDGTINE), and threonine 95 contribute to the ATP site. Positions 215, 218, and 220 each coordinate Mg(2+). Glutamate 271 (proton acceptor) is an active-site residue.

The protein belongs to the diacylglycerol/lipid kinase family. YegS lipid kinase subfamily. Requires Mg(2+) as cofactor. Ca(2+) is required as a cofactor.

The protein resides in the cytoplasm. Its function is as follows. Probably phosphorylates lipids; the in vivo substrate is unknown. The protein is Probable lipid kinase YegS of Salmonella paratyphi A (strain ATCC 9150 / SARB42).